We begin with the raw amino-acid sequence, 316 residues long: Pantothenate kinase (316 aa).

95–102 serves as a coordination point for ATP; it reads GSVAVGKS.

The protein belongs to the prokaryotic pantothenate kinase family.

It localises to the cytoplasm. It carries out the reaction (R)-pantothenate + ATP = (R)-4'-phosphopantothenate + ADP + H(+). The protein operates within cofactor biosynthesis; coenzyme A biosynthesis; CoA from (R)-pantothenate: step 1/5. The polypeptide is Pantothenate kinase (Shewanella sp. (strain ANA-3)).